The sequence spans 447 residues: Ameloblastin (447 aa).

The signal sequence occupies residues 1–26; sequence MSASKIPLFKMKDLILILCLLEMSFA. Proline 37 bears the Hydroxyproline mark. Serine 43 carries the phosphoserine modification. Serine 112 carries O-linked (GalNAc...) serine glycosylation. 3 disordered regions span residues 165 to 211, 307 to 338, and 353 to 383; these read QQVA…DFAD, DSPV…NLEN, and LLAL…PAAA. Repeat copies occupy residues 189–201 and 202–214.

This sequence belongs to the ameloblastin family. As to expression, ameloblast-specific. Located at the Tomes processes of secretory ameloblasts and in the sheath space between rod-interrod enamel.

It is found in the secreted. The protein resides in the extracellular space. Its subcellular location is the extracellular matrix. Functionally, involved in the mineralization and structural organization of enamel. This Homo sapiens (Human) protein is Ameloblastin (AMBN).